The chain runs to 369 residues: Anhydro-N-acetylmuramic acid kinase (369 aa).

Residue 12-19 participates in ATP binding; the sequence is GTSLDGVD.

The protein belongs to the anhydro-N-acetylmuramic acid kinase family.

It catalyses the reaction 1,6-anhydro-N-acetyl-beta-muramate + ATP + H2O = N-acetyl-D-muramate 6-phosphate + ADP + H(+). It functions in the pathway amino-sugar metabolism; 1,6-anhydro-N-acetylmuramate degradation. Its pathway is cell wall biogenesis; peptidoglycan recycling. In terms of biological role, catalyzes the specific phosphorylation of 1,6-anhydro-N-acetylmuramic acid (anhMurNAc) with the simultaneous cleavage of the 1,6-anhydro ring, generating MurNAc-6-P. Is required for the utilization of anhMurNAc either imported from the medium or derived from its own cell wall murein, and thus plays a role in cell wall recycling. The sequence is that of Anhydro-N-acetylmuramic acid kinase from Shigella boydii serotype 18 (strain CDC 3083-94 / BS512).